A 242-amino-acid chain; its full sequence is MISDINALKYKKVLLKVSGEALMGDKQFGHEYDVIKKIAIDIKEVIDLGVEVAIVVGGGNIYRGINAALVGMDRASADYIGMLATVINALTLQNVMESLNIYTRVLSAIPMMSVCEPYIRRKAKRHMEKKRVVIFAGGTGNPFCTTDSAAVLRAIEMNCDILLKATQVDGVYDSDPKKNPDAKKYFTISYKDVITNNLQVMDTAAIAVARENKLPIRVFSIKEQGNFARVIQDKGEYTTIEA.

ATP is bound at residue 16 to 19; sequence KVSG. Glycine 58 provides a ligand contact to UMP. ATP is bound by residues glycine 59 and arginine 63. UMP-binding positions include aspartate 78 and 139 to 146; that span reads TGNPFCTT. The ATP site is built by threonine 166, glutamine 167, tyrosine 172, and aspartate 175.

This sequence belongs to the UMP kinase family. In terms of assembly, homohexamer.

It is found in the cytoplasm. It catalyses the reaction UMP + ATP = UDP + ADP. It participates in pyrimidine metabolism; CTP biosynthesis via de novo pathway; UDP from UMP (UMPK route): step 1/1. Its activity is regulated as follows. Inhibited by UTP. Its function is as follows. Catalyzes the reversible phosphorylation of UMP to UDP. In Rickettsia conorii (strain ATCC VR-613 / Malish 7), this protein is Uridylate kinase.